A 472-amino-acid polypeptide reads, in one-letter code: H(+)/Cl(-) exchange transporter ClcA (472 aa).

At 1-32 the chain is on the cytoplasmic side; that stretch reads MKAETPSFEAHQFVRVRRGDAVRRLIQRDKTP. Residues 33–69 traverse the membrane as a helical segment; the sequence is LAVLFMAAVVGTLAGLVGVAFEKSVNWVQNQRIGALA. Topologically, residues 70-76 are periplasmic; the sequence is QVADHWY. Residues 77–100 form a helical membrane-spanning segment; the sequence is LVWPLAFILSALLAMVGYFLVRRF. A Selectivity filter part_1 motif is present at residues 106–110; the sequence is GSGIP. Position 107 (Ser-107) interacts with chloride. An intramembrane region (helical) is located at residues 109 to 116; the sequence is IPEIEGAL. The Cytoplasmic portion of the chain corresponds to 117-123; sequence EELRPVR. 2 helical membrane passes run 124 to 141 and 148 to 166; these read WWRV…TLGA and EGPM…LDVF. The Selectivity filter part_2 motif lies at 146-150; sequence GREGP. Over 167 to 176 the chain is Cytoplasmic; the sequence is RMRSPEARHT. 2 intramembrane regions (helical) span residues 177–189 and 193–201; these read LLAT…LSAA and PLAGILFII. Residues 202 to 214 are Cytoplasmic-facing; that stretch reads EEMRPQFRYNLIS. The helical transmembrane segment at 215–232 threads the bilayer; it reads IKAVFTGVIMSSIVFRIF. Residues 233 to 252 lie on the Periplasmic side of the membrane; it reads NGEAAIIEVGKLSNAPVNTL. A helical transmembrane segment spans residues 253–281; the sequence is WLYLVLGMLFGCFGPLFNFLVLRTQDLFQ. Residues 282–287 lie on the Cytoplasmic side of the membrane; that stretch reads RIHGGN. The helical transmembrane segment at 288–309 threads the bilayer; it reads IKKWVLIGGLIGGLCGLLGLMQ. Residues 310 to 329 are Periplasmic-facing; it reads PSAVGGGFNLIPIAAAGNFS. The next 2 membrane-spanning stretches (helical) occupy residues 330–349 and 355–376; these read VGLL…ICFS and GIFA…MAAI. The short motif at 355 to 359 is the Selectivity filter part_3 element; the sequence is GIFAP. Chloride is bound by residues Ile-356 and Phe-357. Residues 377–386 are Periplasmic-facing; the sequence is PLFPAYHLDA. An intramembrane region (helical) is located at residues 387-401; that stretch reads GTFAIAGMGALLAAS. The note=Loop between two helices intramembrane region spans 402–404; sequence VRA. The helical intramembrane region spans 405 to 416; it reads PLTGIVLVLEMT. Residues 417 to 421 constitute an intramembrane region (note=Loop between two helices); sequence DNYQL. Residues 422 to 438 traverse the membrane as a helical segment; sequence ILPMIITCLGATLLAQF. Over 439–472 the chain is Cytoplasmic; sequence LGGKPLYSTILQRTLAKQEAEQAAKAQQAPRENT. Tyr-445 lines the chloride pocket.

Belongs to the chloride channel (TC 2.A.49) family. ClcA subfamily. As to quaternary structure, homodimer.

It localises to the cell inner membrane. The enzyme catalyses 2 chloride(in) + H(+)(out) = 2 chloride(out) + H(+)(in). In terms of biological role, proton-coupled chloride transporter. Functions as antiport system and exchanges two chloride ions for 1 proton. Probably acts as an electrical shunt for an outwardly-directed proton pump that is linked to amino acid decarboxylation, as part of the extreme acid resistance (XAR) response. This Klebsiella pneumoniae subsp. pneumoniae (strain ATCC 700721 / MGH 78578) protein is H(+)/Cl(-) exchange transporter ClcA.